The primary structure comprises 427 residues: Beta-1,3-galactosyl-O-glycosyl-glycoprotein beta-1,6-N-acetylglucosaminyltransferase (427 aa).

The Cytoplasmic segment spans residues 1–9; it reads MLRKLWRRK. The interval 5–9 is mediates interaction with GOLPH3 and is necessary and sufficient for localization to the Golgi; the sequence is LWRRK. Residues 10–32 form a helical; Signal-anchor for type II membrane protein membrane-spanning segment; it reads LFSFPTKYYFLFLAFSVVTFTVL. The interval 33–121 is stem region; it reads RIHQKTEFVN…EPLSKEEAGF (89 aa). Over 33 to 427 the chain is Lumenal; the sequence is RIHQKTEFVN…RHKALETLKP (395 aa). Residues N58 and N95 are each glycosylated (N-linked (GlcNAc...) asparagine). Disulfide bonds link C59-C412, C100-C172, C151-C199, and C372-C380. The catalytic stretch occupies residues 122–427; it reads PIAYSIVVHH…RHKALETLKP (306 aa). UDP-N-acetyl-alpha-D-glucosamine is bound by residues 128–130, 155–157, and Y187; these read VVH and DAK. Residues E243, K251, R254, E320, K341, and Y358 each contribute to the a glycoprotein site. E320 functions as the Nucleophile in the catalytic mechanism. Positions 377 and 400 each coordinate UDP-N-acetyl-alpha-D-glucosamine.

The protein belongs to the glycosyltransferase 14 family. Interacts with GOLPH3; may control GCNT1 retention in the Golgi. Expressed in tracheal submucosal glands and epithelium (at protein level).

Its subcellular location is the golgi apparatus membrane. The catalysed reaction is a 3-O-[beta-D-galactosyl-(1-&gt;3)-N-acetyl-alpha-D-galactosaminyl]-L-seryl-[protein] + UDP-N-acetyl-alpha-D-glucosamine = 3-O-{beta-D-galactosyl-(1-&gt;3)-[N-acetyl-beta-D-glucosaminyl-(1-&gt;6)]-N-acetyl-alpha-D-galactosaminyl}-L-seryl-[protein] + UDP + H(+). It catalyses the reaction a 3-O-[beta-D-galactosyl-(1-&gt;3)-N-acetyl-alpha-D-galactosaminyl]-L-threonyl-[protein] + UDP-N-acetyl-alpha-D-glucosamine = a 3-O-{beta-D-galactosyl-(1-&gt;3)-[N-acetyl-beta-D-glucosaminyl-(1-&gt;6)]-N-acetyl-alpha-D-galactosaminyl}-L-threonyl-[protein] + UDP + H(+). The enzyme catalyses a globoside GalGb4Cer + UDP-N-acetyl-alpha-D-glucosamine = a globoside GlcNAc-(beta1-&gt;6)-GalGb4Cer + UDP + H(+). It carries out the reaction a ganglioside GA1 + UDP-N-acetyl-alpha-D-glucosamine = a ganglioside beta-D-GlcNAc-(1-&gt;6)-GA1 + UDP + H(+). It participates in protein modification; protein glycosylation. Its pathway is glycolipid biosynthesis. Functionally, glycosyltransferase that catalyzes the transfer of an N-acetylglucosamine (GlcNAc) moiety in beta1-6 linkage from UDP-GlcNAc onto mucin-type core 1 O-glycan to form the branched mucin-type core 2 O-glycan. The catalysis is metal ion-independent and occurs with inversion of the anomeric configuration of sugar donor. Selectively involved in synthesis of mucin-type core 2 O-glycans that serve as scaffolds for the display of selectin ligand sialyl Lewis X epitope by myeloid cells, with an impact on homeostasis and recruitment to inflammatory sites. Can also act on glycolipid substrates. Transfers GlcNAc moiety to GalGb4Cer globosides in a reaction step to the synthesis of stage-specific embryonic antigen 1 (SSEA-1) determinant. Can use Galbeta1-3GalNAcalpha1- and Galbeta1-3GalNAcbeta1- oligosaccharide derivatives as acceptor substrates. The chain is Beta-1,3-galactosyl-O-glycosyl-glycoprotein beta-1,6-N-acetylglucosaminyltransferase (GCNT1) from Bos taurus (Bovine).